Here is a 2494-residue protein sequence, read N- to C-terminus: Nuclear receptor corepressor 1 (2494 aa).

Positions 1–33 (MSSSGYPPNQGAFSTEQGRYSSHPVQYTFPSSR) are enriched in polar residues. Disordered stretches follow at residues 1–38 (MSSS…QQEF), 53–106 (LLQQ…PRLD), 134–170 (SEVK…KLSK), and 198–222 (QQQL…PVEQ). Residues 71–82 (PVSDRPQDRRQG) show a composition bias toward basic and acidic residues. The segment covering 83–92 (YEQQYHSVTQ) has biased composition (polar residues). Composition is skewed to basic and acidic residues over residues 93 to 106 (NEHE…PRLD), 134 to 148 (SEVK…KHET), and 204 to 213 (EAAKPPEPEK). The segment at 154–304 (SGQPGEEQEA…REQNICQRYD (151 aa)) is interaction with tbl1xr1. Positions 168 to 208 (LSKEELIQSMDRVDREIAKVEQQILKLKKKQQQLEEEAAKP) form a coiled coil. Positions 427 to 478 (QFMNVWTDHEKEIFKEKFVQHPKNFGLIASYLERKTVSDCVLYYYLTKKNEN) constitute an SANT 1 domain. Disordered regions lie at residues 488-638 (PKRR…VEHG), 671-913 (NLLQ…LDSK), 981-1007 (RQRQ…PNMD), 1081-1124 (GARL…GTPG), 1413-1434 (IHEI…ESSR), 1488-1585 (MGER…TQRE), 1745-1845 (LAFP…QESI), and 1912-1987 (EVVK…AHTK). Basic and acidic residues-rich tracts occupy residues 502–525 (AQEE…KEEE) and 535–548 (KEEL…RTDA). The stretch at 502-549 (AQEEKEIEKVEEEKAERNDKKEEERREEEEKEEKEELRDGTKDRTDAI) forms a coiled coil. Residues 582–616 (ASEAAAAANAASTATTAPATTTSTTATTTTAALVP) show a composition bias toward low complexity. The span at 617 to 629 (VAPPPEEPTPPPT) shows a compositional bias: pro residues. An SANT 2 domain is found at 622 to 668 (EEPTPPPTQEQSLVEHGRNWGAIAKMVGSKSESQCKNFYFNYKRRHN). A compositionally biased stretch (polar residues) spans 692 to 702 (QCESVASTVSA). Residues 698–726 (STVSAQEDEENEASNEEENAEDSEGAENS) adopt a coiled-coil conformation. The segment covering 703 to 722 (QEDEENEASNEEENAEDSEG) has biased composition (acidic residues). A compositionally biased stretch (low complexity) spans 723-741 (AENSSDTESAPSPSPAEAA). The segment covering 766 to 779 (ASKSVSDSSPTPTV) has biased composition (polar residues). Positions 829–864 (AEPDEVESKPSESAEVKIEEDTKDQDMERLMDRAEA) are enriched in basic and acidic residues. Polar residues-rich tracts occupy residues 881 to 892 (ESQSDNDSSATC), 993 to 1004 (MSASPGNMSKSP), and 1104 to 1124 (ATSS…GTPG). Over residues 1488 to 1504 (MGERSKYEDTKSSEAIR) the composition is skewed to basic and acidic residues. Polar residues predominate over residues 1508–1519 (TSVVSSGPSVLR). Residues 1548 to 1561 (PSPMSRSSPMARSA) show a composition bias toward low complexity. Positions 1771-1810 (VSAERERERERDRERDREREKEQRERERDRERERERLAAA) form a coiled coil. The segment covering 1773–1807 (AERERERERDRERDREREKEQRERERDRERERERL) has biased composition (basic and acidic residues). Over residues 1835 to 1845 (PSPSVRAQESI) the composition is skewed to polar residues. Basic and acidic residues predominate over residues 1914–1935 (VKPKEMKHDPARSEESLSRRNV). The span at 1953–1972 (QSPYTSSSFSGSKSQGQPSP) shows a compositional bias: low complexity. Positions 1978 to 1987 (AGKEKTAHTK) are enriched in basic and acidic residues. The short motif at 2008-2012 (IDVII) is the CORNR box 1 element. Residues 2018 to 2105 (SDKDGRDRNS…PSPQQTIPGH (88 aa)) form a disordered region. Low complexity predominate over residues 2027–2036 (SQSSDSSSSH). The span at 2039–2048 (HRYDAPRDTI) shows a compositional bias: basic and acidic residues. Positions 2088 to 2102 (RYRQQQESPSPQQTI) are enriched in polar residues. A CORNR box 2 motif is present at residues 2119 to 2123 (ICQII). Residues 2135 to 2177 (QALQQPPASTFQSTNPSSTPVRTKASSRFSPESQVQPVHNQRP) show a composition bias toward polar residues. The disordered stretch occupies residues 2135–2216 (QALQQPPAST…YEPISPPQAP (82 aa)). Basic and acidic residues predominate over residues 2186 to 2205 (VLDRPRGRPGKSPDRGHISE). Residues 2322-2326 (LEDII) carry the CORNR box 3 motif. 2 disordered regions span residues 2346–2413 (GVAQ…SVHS) and 2446–2494 (MLNS…DSDE). The segment covering 2376-2390 (HKQKLISKYGSRKTK) has biased composition (basic residues). Polar residues-rich tracts occupy residues 2446 to 2472 (MLNS…QQSR) and 2485 to 2494 (QYETLSDSDE).

Belongs to the N-CoR nuclear receptor corepressors family. As to quaternary structure, forms a large corepressor complex that contains sin3a/b, histone deacetylases hdac1 and hdac2, rbbp4 and possibly rbbp7. Interacts with the thyroid receptor (TR, composed of rxra and thrb) and the retinoid acid receptor (RAR, composed of rxra and rara) in the absence of ligand. Interacts with tbl1xr1. Interacts with zbtb33/kaiso.

It localises to the nucleus. Its function is as follows. Mediates transcriptional repression by certain nuclear receptors. Participates in complexes which promote histone deacetylation and the formation of repressive chromatin structures which may impede access by the basal transcription machinery. In association with hdac3, may play a role in the regulation of the circadian clock. The protein is Nuclear receptor corepressor 1 (ncor1) of Xenopus tropicalis (Western clawed frog).